We begin with the raw amino-acid sequence, 401 residues long: 3-sulfinopropanoyl-CoA desulfinase (401 aa).

Residues 121-124 (ICIS), Ser-130, and 153-156 (YWIT) each bind FAD. 243 to 244 (YN) lines the substrate pocket. Residues Arg-272, Gln-339, Ser-343, 366–370 (GGTAQ), and Gln-387 contribute to the FAD site.

This sequence belongs to the acyl-CoA dehydrogenase family. Homotetramer. Requires FAD as cofactor.

It carries out the reaction 3-sulfinopropanoyl-CoA + H2O = propanoyl-CoA + sulfite + H(+). In terms of biological role, catalyzes the conversion 3-sulfinopropanoyl-CoA (3SP-CoA) to propanoyl-CoA by abstraction of sulfite. Does not show dehydrogenase activity. Involved in the degradation of 3,3'-dithiodipropionate (DTDP), a sulfur-containing precursor substrate for biosynthesis of polythioesters (PTEs). The polypeptide is 3-sulfinopropanoyl-CoA desulfinase (Advenella mimigardefordensis (strain DSM 17166 / LMG 22922 / DPN7)).